A 266-amino-acid polypeptide reads, in one-letter code: UPF0294 protein YafD (266 aa).

The protein belongs to the UPF0294 family.

The protein localises to the cytoplasm. This Salmonella agona (strain SL483) protein is UPF0294 protein YafD.